Here is a 186-residue protein sequence, read N- to C-terminus: Probable nicotinate-nucleotide adenylyltransferase (186 aa).

This sequence belongs to the NadD family.

The catalysed reaction is nicotinate beta-D-ribonucleotide + ATP + H(+) = deamido-NAD(+) + diphosphate. It functions in the pathway cofactor biosynthesis; NAD(+) biosynthesis; deamido-NAD(+) from nicotinate D-ribonucleotide: step 1/1. Its function is as follows. Catalyzes the reversible adenylation of nicotinate mononucleotide (NaMN) to nicotinic acid adenine dinucleotide (NaAD). In Tropheryma whipplei (strain Twist) (Whipple's bacillus), this protein is Probable nicotinate-nucleotide adenylyltransferase.